The primary structure comprises 246 residues: Dolichol-phosphate mannosyltransferase subunit 1 (246 aa).

Positions 20, 22, 24, 49, 51, 104, 105, 106, 133, 220, and 226 each coordinate GDP-alpha-D-mannose. Mg(2+) is bound at residue aspartate 106. Mn(2+) is bound at residue aspartate 106.

The protein belongs to the glycosyltransferase 2 family. As to quaternary structure, component of the dolichol-phosphate mannose (DPM) synthase complex composed of DPMS1, DPMS2 and DPMS3; in the complex interacts directly with DPMS3. It depends on Mg(2+) as a cofactor. The cofactor is Mn(2+). Ca(2+) is required as a cofactor.

It localises to the endoplasmic reticulum membrane. It carries out the reaction a di-trans,poly-cis-dolichyl phosphate + GDP-alpha-D-mannose = a di-trans,poly-cis-dolichyl beta-D-mannosyl phosphate + GDP. Its pathway is protein modification; protein glycosylation. In terms of biological role, transfers mannose from GDP-mannose to dolichol monophosphate to form dolichol phosphate mannose (Dol-P-Man) which is the mannosyl donor in pathways leading to N-glycosylation, glycosyl phosphatidylinositol membrane anchoring, and O-mannosylation of proteins; catalytic subunit of the dolichol-phosphate mannose (DPM) synthase complex. Plays a role in plant development and physiology, sensitivity to ammonium stress and endoplasmic reticulum stress response. The chain is Dolichol-phosphate mannosyltransferase subunit 1 from Arabidopsis thaliana (Mouse-ear cress).